A 504-amino-acid chain; its full sequence is Maturase K (504 aa).

The protein belongs to the intron maturase 2 family. MatK subfamily.

It is found in the plastid. Its subcellular location is the chloroplast. Usually encoded in the trnK tRNA gene intron. Probably assists in splicing its own and other chloroplast group II introns. In Hamamelis japonica (Japanese witch hazel), this protein is Maturase K.